The chain runs to 413 residues: Gamma-glutamyl phosphate reductase (413 aa).

The protein belongs to the gamma-glutamyl phosphate reductase family.

Its subcellular location is the cytoplasm. The enzyme catalyses L-glutamate 5-semialdehyde + phosphate + NADP(+) = L-glutamyl 5-phosphate + NADPH + H(+). It participates in amino-acid biosynthesis; L-proline biosynthesis; L-glutamate 5-semialdehyde from L-glutamate: step 2/2. Its function is as follows. Catalyzes the NADPH-dependent reduction of L-glutamate 5-phosphate into L-glutamate 5-semialdehyde and phosphate. The product spontaneously undergoes cyclization to form 1-pyrroline-5-carboxylate. This chain is Gamma-glutamyl phosphate reductase, found in Anoxybacillus flavithermus (strain DSM 21510 / WK1).